We begin with the raw amino-acid sequence, 125 residues long: Phosphoribosyl-AMP cyclohydrolase (125 aa).

Asp-74 provides a ligand contact to Mg(2+). Cys-75 lines the Zn(2+) pocket. The Mg(2+) site is built by Asp-76 and Asp-78. 2 residues coordinate Zn(2+): Cys-92 and Cys-99.

Belongs to the PRA-CH family. Homodimer. It depends on Mg(2+) as a cofactor. The cofactor is Zn(2+).

It localises to the cytoplasm. It carries out the reaction 1-(5-phospho-beta-D-ribosyl)-5'-AMP + H2O = 1-(5-phospho-beta-D-ribosyl)-5-[(5-phospho-beta-D-ribosylamino)methylideneamino]imidazole-4-carboxamide. The protein operates within amino-acid biosynthesis; L-histidine biosynthesis; L-histidine from 5-phospho-alpha-D-ribose 1-diphosphate: step 3/9. Functionally, catalyzes the hydrolysis of the adenine ring of phosphoribosyl-AMP. This Syntrophotalea carbinolica (strain DSM 2380 / NBRC 103641 / GraBd1) (Pelobacter carbinolicus) protein is Phosphoribosyl-AMP cyclohydrolase.